The sequence spans 614 residues: Dihydroxy-acid dehydratase (614 aa).

A Mg(2+)-binding site is contributed by Asp81. Cys122 provides a ligand contact to [2Fe-2S] cluster. Mg(2+) is bound by residues Asp123 and Lys124. Position 124 is an N6-carboxylysine (Lys124). Position 193 (Cys193) interacts with [2Fe-2S] cluster. Residue Glu489 participates in Mg(2+) binding. Ser515 acts as the Proton acceptor in catalysis.

It belongs to the IlvD/Edd family. Homodimer. It depends on [2Fe-2S] cluster as a cofactor. Mg(2+) is required as a cofactor.

The enzyme catalyses (2R)-2,3-dihydroxy-3-methylbutanoate = 3-methyl-2-oxobutanoate + H2O. The catalysed reaction is (2R,3R)-2,3-dihydroxy-3-methylpentanoate = (S)-3-methyl-2-oxopentanoate + H2O. Its pathway is amino-acid biosynthesis; L-isoleucine biosynthesis; L-isoleucine from 2-oxobutanoate: step 3/4. It participates in amino-acid biosynthesis; L-valine biosynthesis; L-valine from pyruvate: step 3/4. In terms of biological role, functions in the biosynthesis of branched-chain amino acids. Catalyzes the dehydration of (2R,3R)-2,3-dihydroxy-3-methylpentanoate (2,3-dihydroxy-3-methylvalerate) into 2-oxo-3-methylpentanoate (2-oxo-3-methylvalerate) and of (2R)-2,3-dihydroxy-3-methylbutanoate (2,3-dihydroxyisovalerate) into 2-oxo-3-methylbutanoate (2-oxoisovalerate), the penultimate precursor to L-isoleucine and L-valine, respectively. The polypeptide is Dihydroxy-acid dehydratase (Marinomonas sp. (strain MWYL1)).